The chain runs to 226 residues: N-(5'-phosphoribosyl)anthranilate isomerase (226 aa).

Belongs to the TrpF family.

The catalysed reaction is N-(5-phospho-beta-D-ribosyl)anthranilate = 1-(2-carboxyphenylamino)-1-deoxy-D-ribulose 5-phosphate. The protein operates within amino-acid biosynthesis; L-tryptophan biosynthesis; L-tryptophan from chorismate: step 3/5. The polypeptide is N-(5'-phosphoribosyl)anthranilate isomerase (TRP1) (Candida albicans (strain SC5314 / ATCC MYA-2876) (Yeast)).